The following is a 136-amino-acid chain: Non-structural protein 1 (136 aa).

The protein belongs to the pneumovirus non-structural protein 1 family. As to quaternary structure, monomer. Homomultimer. Heteromultimer with NS2. Interacts with the matrix protein M. Interacts with host ELOC and CUL2; this interaction allows NS1 to form an active E3 ligase with ELOC and CUL2. Interacts with host IRF3; this interaction leads to the disrupted association of IRF3 with CREBBP and thus reduced binding of IRF3 to the IFN-beta promoter. Interacts with host MAVS; this interaction prevents MAVS binding to RIGI and inhibits signaling pathway leading to interferon production. Interacts with host TRIM25 (via SPRY domain); this interaction suppresses RIGI ubiquitination and results in decreased interaction between RIGI and MAVS.

The protein resides in the host cytoplasm. Its subcellular location is the host mitochondrion. It localises to the host nucleus. Functionally, plays a major role in antagonizing the type I IFN-mediated antiviral response by degrading or inhibiting multiple cellular factors required for either IFN induction or response pathways. Acts cooperatively with NS2 to repress activation and nuclear translocation of host IFN-regulatory factor IRF3. Also disrupts the association of IRF3 with CREBBP. Interacts with host mitochondrial-associated membrane (MAM) MAVS and prevents the interaction with RIGI. Interacts with TRIM25 to suppress TRIM25-mediated RIGI ubiquitination and thereby RIGI-MAVS interaction. Together with NS2, participates in the proteasomal degradation of host STAT2, IRF3, IRF7, TBK1 and RIGI through a NS-degradasome involving CUL2 and Elongin-C. The degradasome requires an intact mitochondrial MAVS. Decreases the levels of host TRAF3 and IKBKE/IKK-epsilon. As functions other than disruptions of the type I IFN-mediated antiviral signaling pathways, induces host SOCS1 and SOCS3 expression. Suppresses premature apoptosis by an NF-kappa-B-dependent, interferon-independent mechanism and thus facilitates virus growth. Additionally, NS1 may serve some inhibitory role in viral transcription and RNA replication. Suppresses proliferation and activation of host CD103+ CD8+ cytotoxic T-lymphocytes and Th17 helper T-lymphocytes. This chain is Non-structural protein 1 (1C), found in Bos taurus (Bovine).